The primary structure comprises 361 residues: 3-dehydroquinate synthase (361 aa).

Belongs to the archaeal-type DHQ synthase family.

It catalyses the reaction 2-amino-2,3,7-trideoxy-D-lyxo-hept-6-ulosonate + NAD(+) + H2O = 3-dehydroquinate + NH4(+) + NADH + H(+). Functionally, catalyzes the oxidative deamination and cyclization of 2-amino-3,7-dideoxy-D-threo-hept-6-ulosonic acid (ADH) to yield 3-dehydroquinate (DHQ), which is fed into the canonical shikimic pathway of aromatic amino acid biosynthesis. In Methanocaldococcus jannaschii (strain ATCC 43067 / DSM 2661 / JAL-1 / JCM 10045 / NBRC 100440) (Methanococcus jannaschii), this protein is 3-dehydroquinate synthase (aroB').